Consider the following 149-residue polypeptide: MKKEKRQRLIKQFVKEYEIEKQERLVELLAKKDVLVTQATVSRDIRELNVTKVPSQEGLMIYKIFSEEHLQTDIKLKKKLREVVVKIDCVDQLMVIKTLPGNAHVIGVLFDELDWKEKIGCICGNDTCLIISQSKSDREILEERLNLII.

This sequence belongs to the ArgR family.

The protein resides in the cytoplasm. It functions in the pathway amino-acid degradation; L-arginine degradation via ADI pathway. Its function is as follows. Regulates the transcription of the arc operon, involved in arginine catabolism. The polypeptide is Arginine regulator (argR1) (Bacillus cereus (strain ATCC 10987 / NRS 248)).